The chain runs to 384 residues: 8-amino-7-oxononanoate synthase (384 aa).

Substrate is bound at residue R21. 108-109 (GF) contacts pyridoxal 5'-phosphate. H133 is a substrate binding site. 3 residues coordinate pyridoxal 5'-phosphate: S179, H207, and T233. Residue K236 is modified to N6-(pyridoxal phosphate)lysine. T352 is a substrate binding site.

Belongs to the class-II pyridoxal-phosphate-dependent aminotransferase family. BioF subfamily. Homodimer. It depends on pyridoxal 5'-phosphate as a cofactor.

It carries out the reaction 6-carboxyhexanoyl-[ACP] + L-alanine + H(+) = (8S)-8-amino-7-oxononanoate + holo-[ACP] + CO2. It functions in the pathway cofactor biosynthesis; biotin biosynthesis. Functionally, catalyzes the decarboxylative condensation of pimeloyl-[acyl-carrier protein] and L-alanine to produce 8-amino-7-oxononanoate (AON), [acyl-carrier protein], and carbon dioxide. In Escherichia coli O157:H7, this protein is 8-amino-7-oxononanoate synthase.